The following is a 149-amino-acid chain: D-aminoacyl-tRNA deacylase (149 aa).

A Gly-cisPro motif, important for rejection of L-amino acids motif is present at residues 137 to 138; that stretch reads GP.

The protein belongs to the DTD family. In terms of assembly, homodimer.

The protein localises to the cytoplasm. The enzyme catalyses glycyl-tRNA(Ala) + H2O = tRNA(Ala) + glycine + H(+). It carries out the reaction a D-aminoacyl-tRNA + H2O = a tRNA + a D-alpha-amino acid + H(+). In terms of biological role, an aminoacyl-tRNA editing enzyme that deacylates mischarged D-aminoacyl-tRNAs. Also deacylates mischarged glycyl-tRNA(Ala), protecting cells against glycine mischarging by AlaRS. Acts via tRNA-based rather than protein-based catalysis; rejects L-amino acids rather than detecting D-amino acids in the active site. By recycling D-aminoacyl-tRNA to D-amino acids and free tRNA molecules, this enzyme counteracts the toxicity associated with the formation of D-aminoacyl-tRNA entities in vivo and helps enforce protein L-homochirality. This Syntrophus aciditrophicus (strain SB) protein is D-aminoacyl-tRNA deacylase.